The following is a 176-amino-acid chain: T cell receptor beta constant 1 (176 aa).

In terms of domain architecture, Ig-like C1-type spans 8–117; sequence PEVAVFEPSE…WTQDRAKPVT (110 aa). The cysteines at positions 30 and 95 are disulfide-linked. Residue asparagine 69 is glycosylated (N-linked (GlcNAc...) asparagine). Residues 130 to 144 are connecting peptide; sequence CGFTSVSYQQGVLSA. Residues 150–170 traverse the membrane as a helical segment; that stretch reads ILLGKATLYAVLVSALVLMAM. Topologically, residues 171-176 are cytoplasmic; sequence VKRKDF.

Alpha-beta TR is a heterodimer composed of an alpha and beta chain; disulfide-linked. The alpha-beta TR is associated with the transmembrane signaling CD3 coreceptor proteins to form the TR-CD3 (TcR or TCR). The assembly of alpha-beta TR heterodimers with CD3 occurs in the endoplasmic reticulum where a single alpha-beta TR heterodimer associates with one CD3D-CD3E heterodimer, one CD3G-CD3E heterodimer and one CD247 homodimer forming a stable octameric structure. CD3D-CD3E and CD3G-CD3E heterodimers preferentially associate with TR alpha and TR beta chains, respectively. The association of the CD247 homodimer is the last step of TcR assembly in the endoplasmic reticulum and is required for transport to the cell surface.

It localises to the cell membrane. Functionally, constant region of T cell receptor (TR) beta chain. Alpha-beta T cell receptors are antigen specific receptors which are essential to the immune response and are present on the cell surface of T lymphocytes. Recognize peptide-major histocompatibility (MH) (pMH) complexes that are displayed by antigen presenting cells (APC), a prerequisite for efficient T cell adaptive immunity against pathogens. Binding of alpha-beta TR to pMH complex initiates TR-CD3 clustering on the cell surface and intracellular activation of LCK that phosphorylates the ITAM motifs of CD3G, CD3D, CD3E and CD247 enabling the recruitment of ZAP70. In turn, ZAP70 phosphorylates LAT, which recruits numerous signaling molecules to form the LAT signalosome. The LAT signalosome propagates signal branching to three major signaling pathways, the calcium, the mitogen-activated protein kinase (MAPK) kinase and the nuclear factor NF-kappa-B (NF-kB) pathways, leading to the mobilization of transcription factors that are critical for gene expression and essential for T cell growth and differentiation. The T cell repertoire is generated in the thymus, by V-(D)-J rearrangement. This repertoire is then shaped by intrathymic selection events to generate a peripheral T cell pool of self-MH restricted, non-autoaggressive T cells. Post-thymic interaction of alpha-beta TR with the pMH complexes shapes TR structural and functional avidity. The sequence is that of T cell receptor beta constant 1 from Homo sapiens (Human).